Here is a 225-residue protein sequence, read N- to C-terminus: Fibronectin type III domain-containing protein (225 aa).

The signal sequence occupies residues 1–17 (MFSFGIILLTVVSFTNA). The 101-residue stretch at 106 to 206 (PPTNVIVEST…MPLNVKTPDI (101 aa)) folds into the Fibronectin type-III domain.

In terms of tissue distribution, component of the organic matrix of calcified shell layers like nacre and prisms.

The protein localises to the secreted. The sequence is that of Fibronectin type III domain-containing protein from Mytilus californianus (California mussel).